A 276-amino-acid polypeptide reads, in one-letter code: MAAQTLPASGAAVTFNTQRTRAYLLKLPLFTRATVLIIVLTWVLTLVGKSWNWDVKTWGALIPDEIGIATLYRINTFPFIHLNIFHTILNIVAFTPLLERFEHEHGTLTSVALFFGPFATIPGLIYVFVERFILHANTPVMGASMWVFLLLGMEAIRTYKTNPYFTISTYNIPTWITPLLLVVVTAALLPSSSFLGHLAGLLVGYGFGLGYLKFLAPPEWALRFIEGKLNLLGRLPHYVSVDQKTFGRFGVLPSSASSAEAGIPFSGVSGGQRLGP.

Helical transmembrane passes span 27 to 47 (LPLFTRATVLIIVLTWVLTLV), 77 to 97 (FPFIHLNIFHTILNIVAFTPL), 109 to 129 (TSVALFFGPFATIPGLIYVFV), 132 to 152 (FILHANTPVMGASMWVFLLLG), and 175 to 195 (WITPLLLVVVTAALLPSSSFL). The active-site Nucleophile is the Ser144. His197 is a catalytic residue. A helical membrane pass occupies residues 198-218 (LAGLLVGYGFGLGYLKFLAPP).

Belongs to the peptidase S54 family.

The protein localises to the golgi apparatus membrane. The protein resides in the golgi apparatus. Its subcellular location is the cis-Golgi network membrane. It carries out the reaction Cleaves type-1 transmembrane domains using a catalytic dyad composed of serine and histidine that are contributed by different transmembrane domains.. Functionally, probable rhomboid-type serine protease that catalyzes intramembrane proteolysis. The sequence is that of Rhomboid-type serine protease 2 (rbd-2) from Neurospora crassa (strain ATCC 24698 / 74-OR23-1A / CBS 708.71 / DSM 1257 / FGSC 987).